The primary structure comprises 331 residues: Laforin (331 aa).

In terms of domain architecture, CBM20 spans 1-124; it reads MRFRFGVVVP…NNLVDGVYCL (124 aa). Position 25 is a phosphoserine; by AMPK (S25). Substrate contacts are provided by residues W32, K87, 103–107, D197, D235, and R241; that span reads GPHHD. A Tyrosine-protein phosphatase domain is found at 156–323; sequence HYSRILPNIW…QEDFFQKFGK (168 aa). Catalysis depends on C266, which acts as the Phosphocysteine intermediate. The Glucan phosphatase signature motif CXAGXGR signature appears at 266–272; sequence CNAGVGR. Substrate is bound by residues 267 to 272 and Y304; that span reads NAGVGR.

It belongs to the protein-tyrosine phosphatase family. Homodimer. Interacts with itself. Interacts with PPP1R3B, PPP1R3C, PPP1R3D, HIRIP5, and EPM2AIP1. Binds glycogen and Lafora bodies. Interacts with NHLRC1/malin (via the NHL repeats). Forms a complex with NHLRC1/malin and HSP70. Interacts with PPP1R3D; in the presence of NHLC1/malin the interaction leads to ubiquitination and autophagic degradation of PPP1R3D. Interacts (via the phosphatase domain) with MAPT/Tau; the interaction dephosphorylates MAPT. Isoform 1 and isoform 2 interact to form a heterodimeric complex that lacks phosphatase activity (in vitro). Active phosphatase isoform 7 and isoform 1 interact with each other, but give rise to lower phosphatase activity than isoform 1 or isoform 7 by themselves (in vitro). Active phosphatase isoform 7 and inactive isoform 2 interact with each other, but give rise to lower phosphatase activity than isoform 7 by itself (in vitro). Interacts with PRDM8. Polyubiquitinated by NHLRC1/malin. In terms of processing, phosphorylation on Ser-25 by AMPK affects the phosphatase activity of the enzyme and its ability to homodimerize and interact with NHLRC1, PPP1R3C or PRKAA2. Expressed in heart, skeletal muscle, kidney, pancreas and brain. Isoform 4 is also expressed in the placenta.

It is found in the cytoplasm. Its subcellular location is the endoplasmic reticulum membrane. The protein localises to the cell membrane. The protein resides in the nucleus. The enzyme catalyses O-phospho-L-tyrosyl-[protein] + H2O = L-tyrosyl-[protein] + phosphate. The catalysed reaction is O-phospho-L-seryl-[protein] + H2O = L-seryl-[protein] + phosphate. It carries out the reaction O-phospho-L-threonyl-[protein] + H2O = L-threonyl-[protein] + phosphate. Functionally, plays an important role in preventing glycogen hyperphosphorylation and the formation of insoluble aggregates, via its activity as glycogen phosphatase, and by promoting the ubiquitination of proteins involved in glycogen metabolism via its interaction with the E3 ubiquitin ligase NHLRC1/malin. Shows strong phosphatase activity towards complex carbohydrates in vitro, avoiding glycogen hyperphosphorylation which is associated with reduced branching and formation of insoluble aggregates. Dephosphorylates phosphotyrosine and synthetic substrates, such as para-nitrophenylphosphate (pNPP), and has low activity with phosphoserine and phosphothreonine substrates (in vitro). Has been shown to dephosphorylate MAPT. Forms a complex with NHLRC1/malin and HSP70, which suppresses the cellular toxicity of misfolded proteins by promoting their degradation through the ubiquitin-proteasome system (UPS). Acts as a scaffold protein to facilitate PPP1R3C/PTG ubiquitination by NHLRC1/malin. Also promotes proteasome-independent protein degradation through the macroautophagy pathway. In terms of biological role, does not bind to glycogen. Lacks phosphatase activity and might function as a dominant-negative regulator for the phosphatase activity of isoform 1 and isoform 7. Its function is as follows. Has phosphatase activity (in vitro). The polypeptide is Laforin (EPM2A) (Homo sapiens (Human)).